The following is a 147-amino-acid chain: uncharacterized protein (147 aa).

Positions glutamate 23–phenylalanine 48 are disordered. A compositionally biased stretch (polar residues) spans proline 28–serine 37. The segment covering threonine 38 to phenylalanine 48 has biased composition (basic and acidic residues). A helical membrane pass occupies residues leucine 85–isoleucine 105.

It localises to the membrane. This is an uncharacterized protein from Saccharomyces cerevisiae (strain ATCC 204508 / S288c) (Baker's yeast).